The sequence spans 121 residues: Small ribosomal subunit protein uS13 (121 aa).

The tract at residues 91 to 121 is disordered; it reads HRRGLPVRGQNTKNNARTRKGPSKTVAGKKK. Residues 106-121 show a composition bias toward basic residues; it reads ARTRKGPSKTVAGKKK.

The protein belongs to the universal ribosomal protein uS13 family. Part of the 30S ribosomal subunit. Forms a loose heterodimer with protein S19. Forms two bridges to the 50S subunit in the 70S ribosome.

Located at the top of the head of the 30S subunit, it contacts several helices of the 16S rRNA. In the 70S ribosome it contacts the 23S rRNA (bridge B1a) and protein L5 of the 50S subunit (bridge B1b), connecting the 2 subunits; these bridges are implicated in subunit movement. Contacts the tRNAs in the A and P-sites. The sequence is that of Small ribosomal subunit protein uS13 from Listeria monocytogenes serotype 4b (strain CLIP80459).